Here is a 441-residue protein sequence, read N- to C-terminus: MERTPKRAHGFRSTKPVKRTAEVMMEEEEEEVEVVAPGRGATRKKVSRREESPSPVRRVTRRRETVVDDEENASDEESPEAPLSDPVVYGAQRAMATVASICEALDLQWQGASVRPDDSIWTKMGGTYVRKKHPEFRLTFSSYDSFNAQVGRFLAAVIYSRAGLEPKFVPGGAHVWRHGWFPALQEPFPKCMHGVDMVTKPRTVELNPSSEAGKRALAEQNGVIEKNRFGRQVVVLRFDANAVCYKDQEHSGFPHPHAHGSCAMVFSDAAKAVSAMRHDIDWTKALYPNADKRRAEECVLISTNCNCNYASDRAISGRQFCKMTPYKLNGTDDITRDMVESRPDMKAHKKNPHTMVFTCCNPQAASGGAGRGLKKTEKTCAWRLSAMDLRYAYVFATELFTAVMGSSEPTHVPEFRWNESYAFKTEVLAPVSPIASDDPFA.

Basic residues predominate over residues 1–18 (MERTPKRAHGFRSTKPVK). The interval 1 to 85 (MERTPKRAHG…EESPEAPLSD (85 aa)) is disordered. 2 stretches are compositionally biased toward acidic residues: residues 24–33 (MMEEEEEEVE) and 67–79 (VDDE…EESP). Zn(2+)-binding residues include Cys-191 and His-193. A flexible loop region spans residues 204 to 236 (VELNPSSEAGKRALAEQNGVIEKNRFGRQVVVL). Zn(2+)-binding residues include Cys-244, Cys-262, Cys-305, Cys-307, Cys-359, and Cys-380. The C-terminal arm, DBP binding stretch occupies residues 426 to 441 (EVLAPVSPIASDDPFA).

The protein belongs to the adenoviridae E2A DNA-binding protein family. As to quaternary structure, homomultimerizes on viral ssDNA bound to pTP. Forms a initiation complex with viral polymerase, pTP and hosts NFIA and POU2F1/OCT1. Interacts with host SRCAP.

The protein resides in the host nucleus. Plays a role in the elongation phase of viral strand displacement replication by unwinding the template in an ATP-independent fashion, employing its capacity to form multimers. Also enhances the rate of initiation. Released from template upon second strand synthesis. Assembles in complex with viral pTP, viral pol, host NFIA and host POU2F1/OCT1 on viral origin of replication. Covers the whole ssDNA genome during synthesis. The complementary strand synthesis induces its relese from DNA template. May inhibit cellular transcription mediated by the interaction between host SRCAP and CBP. In Fowl adenovirus A serotype 1 (strain CELO / Phelps) (FAdV-1), this protein is DNA-binding protein.